The chain runs to 379 residues: MERIYLDHAATSPMDERVLEQMIPHFSGSFGNPSSIHSFGRESRKWVDEARAQIAAEIGAAEQEIIFTSGGTEADNLAIMGTALARKDLGRHIITTKIEHHAVLHTCEKLEGDGFDITYLDVDQNGRVSAKQVKEALRDDTILVTVMYGNNEVGTVQPIEEIGELLKEHKAYFHTDAVQAFGLLPIDVKNSHIDLLSVSGHKLNGPKGTGFLYASKDVKLSPLLFGGEQERKRRAGTENVPGIVGLKEAIKLSSEERDEKNEKYQSFKAIFADTLRDAGVAFEVNGDKEHSLPHVLNLYFPGVSVEALLVNLDMAGVAVSSGSACTAGSVLPSHVLTAMFGEESDRLTSSIRISFGLGNTAEQVKTAAKHVADVVKRLT.

Pyridoxal 5'-phosphate contacts are provided by residues 71 to 72 (GT), Asn151, Gln179, and 199 to 201 (SGH). The residue at position 202 (Lys202) is an N6-(pyridoxal phosphate)lysine. A pyridoxal 5'-phosphate-binding site is contributed by Thr237. Cys325 (cysteine persulfide intermediate) is an active-site residue. Cys325 is a binding site for [2Fe-2S] cluster.

This sequence belongs to the class-V pyridoxal-phosphate-dependent aminotransferase family. NifS/IscS subfamily. It depends on pyridoxal 5'-phosphate as a cofactor.

The enzyme catalyses (sulfur carrier)-H + L-cysteine = (sulfur carrier)-SH + L-alanine. Catalyzes the removal of elemental sulfur from cysteine to produce alanine. This is Putative cysteine desulfurase IscS 1 (iscS1) from Bacillus subtilis (strain 168).